The primary structure comprises 205 residues: Methylthioribulose-1-phosphate dehydratase (205 aa).

The Zn(2+) site is built by histidine 96 and histidine 98.

This sequence belongs to the aldolase class II family. MtnB subfamily. Zn(2+) serves as cofactor.

It catalyses the reaction 5-(methylsulfanyl)-D-ribulose 1-phosphate = 5-methylsulfanyl-2,3-dioxopentyl phosphate + H2O. Its pathway is amino-acid biosynthesis; L-methionine biosynthesis via salvage pathway; L-methionine from S-methyl-5-thio-alpha-D-ribose 1-phosphate: step 2/6. Its function is as follows. Catalyzes the dehydration of methylthioribulose-1-phosphate (MTRu-1-P) into 2,3-diketo-5-methylthiopentyl-1-phosphate (DK-MTP-1-P). This is Methylthioribulose-1-phosphate dehydratase from Pseudomonas paraeruginosa (strain DSM 24068 / PA7) (Pseudomonas aeruginosa (strain PA7)).